We begin with the raw amino-acid sequence, 501 residues long: LIM domain-containing protein HDR3 (501 aa).

Positions 33 to 67 (GEANRRRPRVTAGEETTLWEEPVRPKKEEPPRHNN) are disordered. A compositionally biased stretch (basic and acidic residues) spans 53 to 67 (EPVRPKKEEPPRHNN). 2 UIM domains span residues 65-84 (HNNE…DAKN) and 94-113 (ENDE…NPYQ). Residues 131–191 (RVCGGCKHEI…KLCYKELHHP (61 aa)) enclose the LIM zinc-binding domain. A disordered region spans residues 429–448 (YASSSSSSCRPPPSKKGGIS).

Interacts (via N-terminus) with GW6A (via C-terminus).

Its function is as follows. Ubiquitin receptor that functions as a positive regulator of grain size and weight. Functions in the same genetic pathway as GW6A to regulate grain size. Modulates grain size in a similar manner to GW6A, by altering cell proliferation in spikelet hulls. Interacts with and enhances the ubiquitination of GW6A. This stabilizes GW6A, delays protein degradation by the 26S proteasome and enhances GW6A histone acetyltransferase activity. The polypeptide is LIM domain-containing protein HDR3 (Oryza sativa subsp. japonica (Rice)).